We begin with the raw amino-acid sequence, 186 residues long: Probable nicotinate-nucleotide adenylyltransferase (186 aa).

The protein belongs to the NadD family.

It carries out the reaction nicotinate beta-D-ribonucleotide + ATP + H(+) = deamido-NAD(+) + diphosphate. It functions in the pathway cofactor biosynthesis; NAD(+) biosynthesis; deamido-NAD(+) from nicotinate D-ribonucleotide: step 1/1. In terms of biological role, catalyzes the reversible adenylation of nicotinate mononucleotide (NaMN) to nicotinic acid adenine dinucleotide (NaAD). In Tropheryma whipplei (strain TW08/27) (Whipple's bacillus), this protein is Probable nicotinate-nucleotide adenylyltransferase.